The sequence spans 281 residues: AT-hook motif nuclear-localized protein 20 (281 aa).

2 disordered regions span residues 43–85 (MNQS…APIF) and 216–247 (MEEE…DLSG). Positions 67–79 (RRPRGRPPGSKNK) form a DNA-binding region, a.T hook. Residues 91 to 229 (PNALRSHVLE…EDGGGSRQIH (139 aa)) form the PPC domain.

It localises to the nucleus. In terms of biological role, transcription factor that specifically binds AT-rich DNA sequences related to the nuclear matrix attachment regions (MARs). Negatively regulates plant innate immunity (PTI) to pathogens through the down-regulation of the PAMP-triggered NHO1 and FRK1 expression. The polypeptide is AT-hook motif nuclear-localized protein 20 (Arabidopsis thaliana (Mouse-ear cress)).